The chain runs to 423 residues: Gamma-glutamyl phosphate reductase (423 aa).

The protein belongs to the gamma-glutamyl phosphate reductase family.

It is found in the cytoplasm. The enzyme catalyses L-glutamate 5-semialdehyde + phosphate + NADP(+) = L-glutamyl 5-phosphate + NADPH + H(+). It participates in amino-acid biosynthesis; L-proline biosynthesis; L-glutamate 5-semialdehyde from L-glutamate: step 2/2. Its function is as follows. Catalyzes the NADPH-dependent reduction of L-glutamate 5-phosphate into L-glutamate 5-semialdehyde and phosphate. The product spontaneously undergoes cyclization to form 1-pyrroline-5-carboxylate. The polypeptide is Gamma-glutamyl phosphate reductase (Pseudomonas putida (strain ATCC 47054 / DSM 6125 / CFBP 8728 / NCIMB 11950 / KT2440)).